Consider the following 223-residue polypeptide: RNA-free ribonuclease P (223 aa).

This sequence belongs to the HARP family.

It carries out the reaction Endonucleolytic cleavage of RNA, removing 5'-extranucleotides from tRNA precursor.. Functionally, RNA-free RNase P that catalyzes the removal of the 5'-leader sequence from pre-tRNA to produce the mature 5'-terminus. This Methanococcus maripaludis (strain DSM 14266 / JCM 13030 / NBRC 101832 / S2 / LL) protein is RNA-free ribonuclease P.